Here is a 74-residue protein sequence, read N- to C-terminus: Cyclin-dependent kinases regulatory subunit (74 aa).

This sequence belongs to the CKS family. As to quaternary structure, forms a homohexamer that can probably bind six kinase subunits.

Its function is as follows. Binds to the catalytic subunit of the cyclin dependent kinases Cdk1 and Cdk2, and is essential for their biological function. This Drosophila melanogaster (Fruit fly) protein is Cyclin-dependent kinases regulatory subunit (Cks30A).